The primary structure comprises 101 residues: Small ribosomal subunit protein uS14 (101 aa).

This sequence belongs to the universal ribosomal protein uS14 family. In terms of assembly, part of the 30S ribosomal subunit. Contacts proteins S3 and S10.

Binds 16S rRNA, required for the assembly of 30S particles and may also be responsible for determining the conformation of the 16S rRNA at the A site. The chain is Small ribosomal subunit protein uS14 from Buchnera aphidicola subsp. Acyrthosiphon pisum (strain APS) (Acyrthosiphon pisum symbiotic bacterium).